Consider the following 335-residue polypeptide: MTLPLLGPMTLSGFAHSWFFLFLLVVAGLIAIYVVLQLARQKRMLRFANMELLESVAPQRPSRYRHIPAMLLALSLVLFTVAMAGPTHDVRIPRNRAVVMLVIDVSQSMRATDVEPNRMVAAQEAAKQFADELTPGINLGLIAYAGTATVLVSPTTNREATKAALDKLQFADRTATGEAIFTALQAIATVGAVIGGGDTPPPARIVLFSDGKETMPTNPDNPKGAYTAARTAKDQGVPISTISFGTPYGFVEINDQRQPVPVDDETMKKVAQLSGGNSYNAATLAELNSVYVSLQQQIGYETIRGDASMGWLRLGALVLVAAALAALLINRRLPT.

A run of 2 helical transmembrane segments spans residues 18–38 (WFFL…VLQL) and 67–87 (IPAM…AGPT). Residues 98-298 (VVMLVIDVSQ…SVYVSLQQQI (201 aa)) enclose the VWFA domain. The helical transmembrane segment at 309-329 (MGWLRLGALVLVAAALAALLI) threads the bilayer.

Belongs to the UPF0353 family.

The protein resides in the cell membrane. This chain is UPF0353 protein MUL_1490, found in Mycobacterium ulcerans (strain Agy99).